A 2472-amino-acid polypeptide reads, in one-letter code: Spectrin alpha chain, non-erythrocytic 1 (2472 aa).

At Met-1 the chain carries N-acetylmethionine. Spectrin repeat units follow at residues 45–146 (RFQF…IKLL), 150–251 (KLVQ…QGKL), 256–358 (EVQR…ARLD), 361–465 (YRLQ…QYEQ), 468–570 (DLQL…AQLA), 574–676 (HLQQ…KLRE), 679–781 (QQQQ…QKLA), 785–888 (RLQQ…DLED), and 891–961 (QAQQ…QQVA). At Ser-587 the chain carries Phosphoserine. Lys-637 bears the N6-acetyllysine mark. Lys-803 bears the N6-acetyllysine mark. Phosphoserine occurs at positions 924, 982, 999, 1029, 1031, and 1041. The SH3 domain occupies 967 to 1026 (TGKELVLALYDYQEKSPREVTMKKGDILTLLNSTNKDWWKVEVNDRQGFVPAAYVKKLDP). The stretch at 1096 to 1166 (LFREANELQQ…LESEGLMAEE (71 aa)) is one Spectrin 10 repeat. Position 1176 is a phosphotyrosine (Tyr-1176). A phosphoserine mark is found at Ser-1190, Ser-1207, Ser-1217, Ser-1291, Ser-1306, Ser-1323, and Ser-1338. Residues 1233 to 1336 (HEVQRFHRDA…RADQRKAKLG (104 aa)) form a Spectrin 11 repeat. 2 Spectrin repeats span residues 1339–1441 (HDLQ…RMML) and 1446–1549 (ELQL…KLGE). Residue Lys-1519 is modified to N6-acetyllysine. Phosphoserine occurs at positions 1550, 1557, 1578, 1615, and 1647. Spectrin repeat units lie at residues 1552 to 1656 (TLQQ…KLKE), 1659 to 1762 (KQQN…KLSE), 1764 to 1868 (HRLH…RLEE), 1871 to 1974 (EYQQ…KLDE), 1978 to 2081 (FLQF…KLLE), 2092 to 2194 (LFLT…LELQ), and 2206 to 2310 (LRQE…NLEQ). Position 2020 is a phosphothreonine (Thr-2020). Lys-2052 bears the N6-acetyllysine mark. Thr-2066 carries the post-translational modification Phosphothreonine. EF-hand domains follow at residues 2323-2358 (EALK…LGYD), 2366-2401 (EPDP…RETE), and 2404-2439 (KSSE…EQAD). Ca(2+) contacts are provided by Asp-2336, Asp-2338, Ser-2340, Arg-2342, Glu-2347, Asp-2379, Asn-2381, Asp-2383, His-2385, and Glu-2390. Lys-2421 carries the post-translational modification N6-acetyllysine.

It belongs to the spectrin family. As to quaternary structure, like erythrocyte spectrin, the spectrin-like proteins are capable of forming dimers which can further associate to tetramers. Interacts (via C-terminal spectrin repeats) with TRPC4. Interacts with CALM and EMD. Interacts with isoform 1 of ACP1. Identified in a complex with ACTN4, CASK, IQGAP1, MAGI2, NPHS1 and SPTBN1. Interacts with SHANK3 (via ANK repeats). Interacts with CLN3; this interaction regulates the fodrin localization at the plasma membrane. Phosphorylation of Tyr-1176 decreases sensitivity to cleavage by calpain in vitro.

It localises to the cytoplasm. It is found in the cytoskeleton. The protein resides in the cell cortex. Functionally, fodrin, which seems to be involved in secretion, interacts with calmodulin in a calcium-dependent manner and is thus candidate for the calcium-dependent movement of the cytoskeleton at the membrane. This chain is Spectrin alpha chain, non-erythrocytic 1 (Sptan1), found in Mus musculus (Mouse).